The following is a 243-amino-acid chain: Endochitinase (243 aa).

Intrachain disulfides connect C23–C85, C97–C105, and C223–C236. The Proton donor role is filled by E67.

The protein resides in the vacuole. The enzyme catalyses Random endo-hydrolysis of N-acetyl-beta-D-glucosaminide (1-&gt;4)-beta-linkages in chitin and chitodextrins.. Defense against chitin-containing fungal pathogens. Shows activity on chitin, tetra-N-acetylglucosamine and chitosan. The polypeptide is Endochitinase (Carica papaya (Papaya)).